A 254-amino-acid chain; its full sequence is Alcohol dehydrogenase (254 aa).

Phe-10–Leu-33 contacts NAD(+). Position 138 (Ser-138) interacts with substrate. Residue Tyr-151 is the Proton acceptor of the active site.

This sequence belongs to the short-chain dehydrogenases/reductases (SDR) family. In terms of assembly, homodimer.

The catalysed reaction is a primary alcohol + NAD(+) = an aldehyde + NADH + H(+). It catalyses the reaction a secondary alcohol + NAD(+) = a ketone + NADH + H(+). The chain is Alcohol dehydrogenase (Adh) from Drosophila borealis (Fruit fly).